Reading from the N-terminus, the 340-residue chain is Pesticidal crystal protein Cry15Aa (340 aa).

The segment at Arg318 to Glu340 is disordered.

Its function is as follows. Promotes colloidosmotic lysis by binding to the midgut epithelial cells of lepidopteran larvae. The polypeptide is Pesticidal crystal protein Cry15Aa (cry15Aa) (Bacillus thuringiensis subsp. thompsoni).